A 772-amino-acid polypeptide reads, in one-letter code: RNA exonuclease 5 (772 aa).

Over residues 1–10 (MEPEREGTER) the composition is skewed to basic and acidic residues. Residues 1–26 (MEPEREGTERHPRKVRKRRQAPNKLV) are disordered. Positions 11 to 21 (HPRKVRKRRQA) are enriched in basic residues. The Exonuclease domain maps to 228-376 (LFGLDCEMCL…EDARIILELA (149 aa)). RRM domains are found at residues 505-579 (STVY…RPVT) and 600-679 (GSIY…RHLH).

This chain is RNA exonuclease 5 (REXO5), found in Macaca fascicularis (Crab-eating macaque).